The sequence spans 257 residues: Snake venom serine protease 2C (257 aa).

A signal peptide spans methionine 1–alanine 18. The propeptide occupies glutamine 19–leucine 24. The Peptidase S1 domain occupies valine 25–alanine 248. Cystine bridges form between cysteine 31-cysteine 162, cysteine 49-cysteine 65, cysteine 97-cysteine 255, cysteine 141-cysteine 209, cysteine 173-cysteine 188, and cysteine 199-cysteine 224. Active-site charge relay system residues include histidine 64 and aspartate 109. Residues asparagine 116, asparagine 120, and asparagine 121 are each glycosylated (N-linked (GlcNAc...) asparagine). Serine 203 acts as the Charge relay system in catalysis.

It belongs to the peptidase S1 family. Snake venom subfamily. Monomer. As to expression, expressed by the venom gland.

Its subcellular location is the secreted. Its function is as follows. Snake venom serine protease that may act in the hemostasis system of the prey. In Craspedocephalus gramineus (Bamboo pit viper), this protein is Snake venom serine protease 2C (TLG2C).